The primary structure comprises 242 residues: Small ribosomal subunit protein uS2 (242 aa).

Belongs to the universal ribosomal protein uS2 family.

The protein is Small ribosomal subunit protein uS2 of Vibrio vulnificus (strain CMCP6).